The following is a 123-amino-acid chain: S-adenosylmethionine decarboxylase proenzyme 2 (123 aa).

The active-site Schiff-base intermediate with substrate; via pyruvic acid is the Ser-65. Ser-65 is subject to Pyruvic acid (Ser); by autocatalysis. His-70 functions as the Proton acceptor; for processing activity in the catalytic mechanism. Cys-85 acts as the Proton donor; for catalytic activity in catalysis.

Belongs to the prokaryotic AdoMetDC family. Type 1 subfamily. As to quaternary structure, heterotetramer of two alpha and two beta chains arranged as a dimer of alpha/beta heterodimers. Pyruvate is required as a cofactor. In terms of processing, is synthesized initially as an inactive proenzyme. Formation of the active enzyme involves a self-maturation process in which the active site pyruvoyl group is generated from an internal serine residue via an autocatalytic post-translational modification. Two non-identical subunits are generated from the proenzyme in this reaction, and the pyruvate is formed at the N-terminus of the alpha chain, which is derived from the carboxyl end of the proenzyme. The post-translation cleavage follows an unusual pathway, termed non-hydrolytic serinolysis, in which the side chain hydroxyl group of the serine supplies its oxygen atom to form the C-terminus of the beta chain, while the remainder of the serine residue undergoes an oxidative deamination to produce ammonia and the pyruvoyl group blocking the N-terminus of the alpha chain.

The catalysed reaction is S-adenosyl-L-methionine + H(+) = S-adenosyl 3-(methylsulfanyl)propylamine + CO2. Its pathway is amine and polyamine biosynthesis; S-adenosylmethioninamine biosynthesis; S-adenosylmethioninamine from S-adenosyl-L-methionine: step 1/1. Catalyzes the decarboxylation of S-adenosylmethionine to S-adenosylmethioninamine (dcAdoMet), the propylamine donor required for the synthesis of the polyamines spermine and spermidine from the diamine putrescine. The polypeptide is S-adenosylmethionine decarboxylase proenzyme 2 (Bacillus cereus (strain ZK / E33L)).